Consider the following 93-residue polypeptide: Bombyxin B-11 (93 aa).

A signal peptide spans 1–22 (MMKTAVMFILVVVISLTYSSEE). Intrachain disulfides connect Cys-30-Cys-75, Cys-42-Cys-92, and Cys-74-Cys-79. Residues 49–64 (GGAQYAPYWQETYLRS) constitute a propeptide, bombyxin B-11 C peptide.

Belongs to the insulin family. Heterodimer of a B chain and an A chain linked by two disulfide bonds.

The protein localises to the secreted. In terms of biological role, brain peptide responsible for activation of prothoracic glands to produce ecdysone in insects. The polypeptide is Bombyxin B-11 (BBXB11) (Bombyx mori (Silk moth)).